The sequence spans 372 residues: Cobalt-precorrin-5B C(1)-methyltransferase (372 aa).

The protein belongs to the CbiD family.

The enzyme catalyses Co-precorrin-5B + S-adenosyl-L-methionine = Co-precorrin-6A + S-adenosyl-L-homocysteine. Its pathway is cofactor biosynthesis; adenosylcobalamin biosynthesis; cob(II)yrinate a,c-diamide from sirohydrochlorin (anaerobic route): step 6/10. In terms of biological role, catalyzes the methylation of C-1 in cobalt-precorrin-5B to form cobalt-precorrin-6A. The chain is Cobalt-precorrin-5B C(1)-methyltransferase from Geobacillus thermodenitrificans (strain NG80-2).